A 131-amino-acid chain; its full sequence is MKLGAFYKGGDLVKPSGGKKGRVRKTKKKALGGGPPQIPKLGEEDIRYVERVRGGNHKVRLRQARYANVYIPKERRHVKAKILSIVSSPSNPDYARRNYIVKGAIIQTEVGKAVVTSRPGQDGVINAVLIE.

Residues 15-36 (PSGGKKGRVRKTKKKALGGGPP) form a disordered region. Basic residues predominate over residues 17–30 (GGKKGRVRKTKKKA).

This sequence belongs to the eukaryotic ribosomal protein eS8 family. As to quaternary structure, part of the 30S ribosomal subunit.

The chain is Small ribosomal subunit protein eS8 from Pyrobaculum calidifontis (strain DSM 21063 / JCM 11548 / VA1).